The chain runs to 263 residues: Pyridoxine 5'-phosphate synthase (263 aa).

Asn-15 contacts 3-amino-2-oxopropyl phosphate. 17-18 (DH) contributes to the 1-deoxy-D-xylulose 5-phosphate binding site. Arg-26 serves as a coordination point for 3-amino-2-oxopropyl phosphate. His-51 (proton acceptor) is an active-site residue. 1-deoxy-D-xylulose 5-phosphate-binding residues include Arg-53 and His-58. The active-site Proton acceptor is Glu-78. Position 108 (Thr-108) interacts with 1-deoxy-D-xylulose 5-phosphate. The active-site Proton donor is His-199. Residues Gly-200 and 221 to 222 (GH) each bind 3-amino-2-oxopropyl phosphate.

Belongs to the PNP synthase family. As to quaternary structure, homooctamer; tetramer of dimers.

The protein localises to the cytoplasm. It catalyses the reaction 3-amino-2-oxopropyl phosphate + 1-deoxy-D-xylulose 5-phosphate = pyridoxine 5'-phosphate + phosphate + 2 H2O + H(+). The protein operates within cofactor biosynthesis; pyridoxine 5'-phosphate biosynthesis; pyridoxine 5'-phosphate from D-erythrose 4-phosphate: step 5/5. Catalyzes the complicated ring closure reaction between the two acyclic compounds 1-deoxy-D-xylulose-5-phosphate (DXP) and 3-amino-2-oxopropyl phosphate (1-amino-acetone-3-phosphate or AAP) to form pyridoxine 5'-phosphate (PNP) and inorganic phosphate. The polypeptide is Pyridoxine 5'-phosphate synthase (Ralstonia nicotianae (strain ATCC BAA-1114 / GMI1000) (Ralstonia solanacearum)).